Consider the following 172-residue polypeptide: Large ribosomal subunit protein uL10 (172 aa).

This sequence belongs to the universal ribosomal protein uL10 family. Part of the ribosomal stalk of the 50S ribosomal subunit. The N-terminus interacts with L11 and the large rRNA to form the base of the stalk. The C-terminus forms an elongated spine to which L12 dimers bind in a sequential fashion forming a multimeric L10(L12)X complex.

Forms part of the ribosomal stalk, playing a central role in the interaction of the ribosome with GTP-bound translation factors. The sequence is that of Large ribosomal subunit protein uL10 from Rhodopseudomonas palustris (strain BisB5).